A 359-amino-acid chain; its full sequence is Protein Wnt-5b (359 aa).

An N-terminal signal peptide occupies residues 1-17 (MPSLLLLFTAALLSSWA). A disulfide bridge links cysteine 83 with cysteine 94. Residues asparagine 93 and asparagine 99 are each glycosylated (N-linked (GlcNAc...) asparagine). 10 cysteine pairs are disulfide-bonded: cysteine 133–cysteine 141, cysteine 143–cysteine 161, cysteine 217–cysteine 231, cysteine 219–cysteine 226, cysteine 288–cysteine 319, cysteine 304–cysteine 314, cysteine 318–cysteine 358, cysteine 334–cysteine 349, cysteine 336–cysteine 346, and cysteine 341–cysteine 342. Serine 223 carries the O-palmitoleoyl serine; by PORCN lipid modification. Residues asparagine 291 and asparagine 305 are each glycosylated (N-linked (GlcNAc...) asparagine).

It belongs to the Wnt family. Interacts with PORCN. Palmitoleoylation is required for efficient binding to frizzled receptors. Depalmitoleoylation leads to Wnt signaling pathway inhibition.

It localises to the secreted. It is found in the extracellular space. Its subcellular location is the extracellular matrix. In terms of biological role, ligand for members of the frizzled family of seven transmembrane receptors. Probable developmental protein. May be a signaling molecule which affects the development of discrete regions of tissues. Is likely to signal over only few cell diameters. In Homo sapiens (Human), this protein is Protein Wnt-5b (WNT5B).